Reading from the N-terminus, the 605-residue chain is UPF0313 protein GSU2873 (605 aa).

A Radical SAM core domain is found at 291-561; the sequence is AYEQIRASVT…LQKALLLWHL (271 aa). Residues C305, C309, and C312 each coordinate [4Fe-4S] cluster. The tract at residues 586–605 is disordered; it reads GGAAGGGGGRSGSGFRPGRT. Over residues 587-597 the composition is skewed to gly residues; sequence GAAGGGGGRSG.

It belongs to the UPF0313 family. [4Fe-4S] cluster is required as a cofactor.

The sequence is that of UPF0313 protein GSU2873 from Geobacter sulfurreducens (strain ATCC 51573 / DSM 12127 / PCA).